Reading from the N-terminus, the 150-residue chain is Large ribosomal subunit protein uL13 (150 aa).

It belongs to the universal ribosomal protein uL13 family. Part of the 50S ribosomal subunit.

This protein is one of the early assembly proteins of the 50S ribosomal subunit, although it is not seen to bind rRNA by itself. It is important during the early stages of 50S assembly. This chain is Large ribosomal subunit protein uL13, found in Persephonella marina (strain DSM 14350 / EX-H1).